Consider the following 434-residue polypeptide: UDP-N-acetylglucosamine 1-carboxyvinyltransferase (434 aa).

34-35 (KN) lines the phosphoenolpyruvate pocket. Residue arginine 104 coordinates UDP-N-acetyl-alpha-D-glucosamine. Catalysis depends on cysteine 128, which acts as the Proton donor. Residue cysteine 128 is modified to 2-(S-cysteinyl)pyruvic acid O-phosphothioketal. Residues aspartate 319 and isoleucine 341 each coordinate UDP-N-acetyl-alpha-D-glucosamine.

It belongs to the EPSP synthase family. MurA subfamily.

Its subcellular location is the cytoplasm. The enzyme catalyses phosphoenolpyruvate + UDP-N-acetyl-alpha-D-glucosamine = UDP-N-acetyl-3-O-(1-carboxyvinyl)-alpha-D-glucosamine + phosphate. It participates in cell wall biogenesis; peptidoglycan biosynthesis. Its function is as follows. Cell wall formation. Adds enolpyruvyl to UDP-N-acetylglucosamine. The chain is UDP-N-acetylglucosamine 1-carboxyvinyltransferase from Prochlorococcus marinus (strain MIT 9313).